The chain runs to 62 residues: Short neurotoxin B (62 aa).

Residues 1-16 (RRCFNHPSSQPQTNKS) show a composition bias toward polar residues. The disordered stretch occupies residues 1–21 (RRCFNHPSSQPQTNKSCPPGE). Disulfide bonds link Cys-3–Cys-24, Cys-17–Cys-41, Cys-43–Cys-54, and Cys-55–Cys-60.

This sequence belongs to the three-finger toxin family. Short-chain subfamily. Type I alpha-neurotoxin sub-subfamily. In terms of tissue distribution, expressed by the venom gland.

It localises to the secreted. Functionally, binds to muscle nicotinic acetylcholine receptor (nAChR) and inhibit acetylcholine from binding to the receptor, thereby impairing neuromuscular transmission. In Laticauda crockeri (Crocker's sea snake), this protein is Short neurotoxin B.